The primary structure comprises 458 residues: MALWGGRFTQAADQRFKQFNDSLRFDYRLAEQDIVGSVAWSKALVTVGVLTADEQRQLEEALNVLLEEVRANPQQILQSDAEDIHSWVEGRLIDKVGQLGKKLHTGRSRNDQVATDLKLWCKETVRELLTANRQLQSALVETAQANQDAIMPGYTHLQRAQPVTFAHWCLAYVEMLARDESRLQDTLKRLDVSPLGCGALAGTAYEIDREQLAGWLGFASATRNSLDSVSDRDHVLELLSDAAIGMVHLSRFAEDLIFFNSGEAGFVELSDRVTSGSSLMPQKKNPDALELIRGKCGRVQGALTGMMMTLKGLPLAYNKDMQEDKEGLFDALDTWLDCLHMAALVLDGIQVKRPRCQDAAQQGYANATELADYLVAKGVPFREAHHIVGEAVVEAIRQGKPLEALPLADLQKFSRVIGDDVYPILSLQSCLDKRAAKGGVSPQQVAQAIDDAKARLAL.

This sequence belongs to the lyase 1 family. Argininosuccinate lyase subfamily.

It is found in the cytoplasm. The catalysed reaction is 2-(N(omega)-L-arginino)succinate = fumarate + L-arginine. It participates in amino-acid biosynthesis; L-arginine biosynthesis; L-arginine from L-ornithine and carbamoyl phosphate: step 3/3. The sequence is that of Argininosuccinate lyase from Salmonella agona (strain SL483).